Reading from the N-terminus, the 346-residue chain is Histidinol-phosphate aminotransferase (346 aa).

An N6-(pyridoxal phosphate)lysine modification is found at Lys-209.

This sequence belongs to the class-II pyridoxal-phosphate-dependent aminotransferase family. Histidinol-phosphate aminotransferase subfamily. As to quaternary structure, homodimer. Requires pyridoxal 5'-phosphate as cofactor.

The enzyme catalyses L-histidinol phosphate + 2-oxoglutarate = 3-(imidazol-4-yl)-2-oxopropyl phosphate + L-glutamate. Its pathway is amino-acid biosynthesis; L-histidine biosynthesis; L-histidine from 5-phospho-alpha-D-ribose 1-diphosphate: step 7/9. This is Histidinol-phosphate aminotransferase from Vibrio vulnificus (strain CMCP6).